The sequence spans 377 residues: Galactoside alpha-(1,2)-fucosyltransferase 1 (377 aa).

At 1 to 8 the chain is on the cytoplasmic side; the sequence is MWTPSRRQ. The chain crosses the membrane as a helical; Signal-anchor for type II membrane protein span at residues 9 to 26; that stretch reads LCLAFLLVCVLSAGSFFF. Over 27–377 the chain is Lumenal; sequence HLNGGNFFRN…WKPDSLFRLV (351 aa). N-linked (GlcNAc...) asparagine glycans are attached at residues asparagine 67, asparagine 303, and asparagine 329.

This sequence belongs to the glycosyltransferase 11 family. In terms of tissue distribution, in the adult, highly expressed in pancreas, testis and epididymis and to a lesser extent in thymus, lung, stomach, small intestine, colon, spleen and uterus. Not expressed in brain, heart, skeletal muscle, kidney, liver and bone marrow. Expressed in epididymis and testis.

Its subcellular location is the golgi apparatus. The protein resides in the golgi stack membrane. The enzyme catalyses a beta-D-galactosyl-(1-&gt;4)-N-acetyl-beta-D-glucosaminyl derivative + GDP-beta-L-fucose = an alpha-L-Fuc-(1-&gt;2)-beta-D-Gal-(1-&gt;4)-beta-D-GlcNAc derivative + GDP + H(+). It carries out the reaction a ganglioside GA1 + GDP-beta-L-fucose = a ganglioside Fuc-GA1 + GDP + H(+). It catalyses the reaction a beta-D-Gal-(1-&gt;3)-beta-D-GlcNAc-(1-&gt;3)-beta-D-Gal-(1-&gt;4)-beta-D-Glc-(1&lt;-&gt;1')-Cer(d18:1(4E)) + GDP-beta-L-fucose = alpha-L-fucosyl-(1-&gt;2)- beta-D-galactosyl-(1-&gt;3)-N-acetyl-beta-D-glucosaminyl-(1-&gt;3)-beta-D-galactosyl-(1-&gt;4)-beta-D-glucosyl-(1&lt;-&gt;1')-N-acylsphing-4-enine + GDP + H(+). The catalysed reaction is a neolactoside nLc4Cer(d18:1(4E)) + GDP-beta-L-fucose = a neolactoside IV(2)-alpha-Fuc-nLc4Cer(d18:1(4E)) + GDP + H(+). The enzyme catalyses a ganglioside GM1 + GDP-beta-L-fucose = a ganglioside Fuc-GM1 + GDP + H(+). It carries out the reaction beta-D-galactosyl-(1-&gt;3)-N-acetyl-D-galactosamine + GDP-beta-L-fucose = alpha-L-fucosyl-(1-&gt;2)-beta-D-galactosyl-(1-&gt;3)-N-acetyl-D-galactosamine + GDP + H(+). It participates in protein modification; protein glycosylation. Catalyzes the transfer of L-fucose, from a guanosine diphosphate-beta-L-fucose, to the terminal galactose residue of glycoconjugates through an alpha(1,2) linkage leading to H antigen synthesis that is an intermediate substrate in the synthesis of ABO blood group antigens. H antigen is essential for maturation of the glomerular layer of the main olfactory bulb, in cell migration and early cell-cell contacts during tumor associated angiogenesis. Preferentially fucosylates soluble lactose and to a lesser extent, fucosylates glycolipids gangliosides GA1 and GM1a. The protein is Galactoside alpha-(1,2)-fucosyltransferase 1 of Mus musculus (Mouse).